Consider the following 284-residue polypeptide: Tryptophan 2,3-dioxygenase (284 aa).

Residues 53 to 57 (FIIQH) and Arg119 contribute to the substrate site. Residue His242 participates in heme binding. Residue Thr256 participates in substrate binding.

This sequence belongs to the tryptophan 2,3-dioxygenase family. As to quaternary structure, homotetramer. Heme is required as a cofactor.

It catalyses the reaction L-tryptophan + O2 = N-formyl-L-kynurenine. It participates in amino-acid degradation; L-tryptophan degradation via kynurenine pathway; L-kynurenine from L-tryptophan: step 1/2. It functions in the pathway siderophore biosynthesis; quinolobactin biosynthesis. Its function is as follows. Heme-dependent dioxygenase that catalyzes the oxidative cleavage of the L-tryptophan (L-Trp) pyrrole ring and converts L-tryptophan to N-formyl-L-kynurenine. Catalyzes the oxidative cleavage of the indole moiety. Required for synthesis of the siderophore quinolobactin. In Pseudomonas fluorescens, this protein is Tryptophan 2,3-dioxygenase.